A 243-amino-acid polypeptide reads, in one-letter code: Terpene cyclase ptmB (243 aa).

3 helical membrane-spanning segments follow: residues 19 to 39 (IANL…VGMI), 48 to 68 (YGMA…YSLI), and 78 to 98 (GVFI…IKFA). Residue Asn-111 is glycosylated (N-linked (GlcNAc...) asparagine). 4 consecutive transmembrane segments (helical) span residues 112 to 132 (LSLI…ALAA), 137 to 157 (SLAY…GGLC), 172 to 194 (LWLS…WMYW), and 205 to 225 (LVLW…ICYW).

Belongs to the paxB family.

Its subcellular location is the membrane. It participates in secondary metabolite biosynthesis. In terms of biological role, terpene cyclase; part of the gene cluster that mediates the biosynthesis of the indole diterpenes penitrems. The geranylgeranyl diphosphate (GGPP) synthase ptmG catalyzes the first step in penitrem biosynthesis via conversion of farnesyl pyrophosphate and isopentyl pyrophosphate into geranylgeranyl pyrophosphate (GGPP). Condensation of indole-3-glycerol phosphate with GGPP by the prenyl transferase ptmC then forms 3-geranylgeranylindole (3-GGI). Epoxidation by the FAD-dependent monooxygenase ptmM leads to a epoxidized-GGI that is substrate of the terpene cyclase ptmB for cyclization to yield paspaline. Paspaline is subsequently converted to 13-desoxypaxilline by the cytochrome P450 monooxygenase ptmP, the latter being then converted to paxilline by the cytochrome P450 monooxygenase ptmQ. Paxilline is converted to beta-paxitriol via C-10 ketoreduction by the short-chain dehydrogenase ptmH which can be monoprenylated at the C-20 by the indole diterpene prenyltransferase ptmD. A two-step elimination (acetylation and elimination) process performed by the O-acetyltransferase ptmV and ptmI leads to the production of the prenylated form of penijanthine. The FAD-linked oxidoreductase ptmO then converts the prenylated form of penijanthine into PC-M5 which is in turn transformed into PC-M4 by the aromatic dimethylallyltransferase ptmE. Five sequential oxidative transformations performed by the cytochrome P450 monooxygenases ptmK, ptmU, ptmL, ptmN and ptmJ yield the various penitrem compounds. PtmK, ptmU and ptmM are involved in the formation of the key bicyclic ring of penitrem C via the formation of the intermediates secopenitrem D and penitrem D. PtmL catalyzes the epoxidation of penitrem D and C to yield penitrem B and F, respectively. PtmJ catalyzes the last benzylic hydroxylation to convert penitrem B to prenitrem E and penitrem F to penitrem A. The sequence is that of Terpene cyclase ptmB from Penicillium ochrochloron.